Consider the following 373-residue polypeptide: tRNA-specific 2-thiouridylase MnmA (373 aa).

Residues 12–19 (GMSGGVDS) and Met-38 each bind ATP. An interaction with target base in tRNA region spans residues 98–100 (NPD). Cys-103 (nucleophile) is an active-site residue. Cysteines 103 and 200 form a disulfide. Residue Gly-127 participates in ATP binding. Residues 150 to 152 (KDQ) form an interaction with tRNA region. Catalysis depends on Cys-200, which acts as the Cysteine persulfide intermediate. The interval 312–313 (RY) is interaction with tRNA.

This sequence belongs to the MnmA/TRMU family.

The protein localises to the cytoplasm. It catalyses the reaction S-sulfanyl-L-cysteinyl-[protein] + uridine(34) in tRNA + AH2 + ATP = 2-thiouridine(34) in tRNA + L-cysteinyl-[protein] + A + AMP + diphosphate + H(+). Functionally, catalyzes the 2-thiolation of uridine at the wobble position (U34) of tRNA, leading to the formation of s(2)U34. The polypeptide is tRNA-specific 2-thiouridylase MnmA (Streptococcus agalactiae serotype Ia (strain ATCC 27591 / A909 / CDC SS700)).